An 89-amino-acid polypeptide reads, in one-letter code: Small ribosomal subunit protein uS15 (89 aa).

Basic and acidic residues predominate over residues 1-21; the sequence is MSITTEEKARVMKEYGTKDGD. The segment at 1 to 24 is disordered; sequence MSITTEEKARVMKEYGTKDGDTGS.

It belongs to the universal ribosomal protein uS15 family. Part of the 30S ribosomal subunit. Forms a bridge to the 50S subunit in the 70S ribosome, contacting the 23S rRNA.

Functionally, one of the primary rRNA binding proteins, it binds directly to 16S rRNA where it helps nucleate assembly of the platform of the 30S subunit by binding and bridging several RNA helices of the 16S rRNA. Its function is as follows. Forms an intersubunit bridge (bridge B4) with the 23S rRNA of the 50S subunit in the ribosome. This Ruegeria pomeroyi (strain ATCC 700808 / DSM 15171 / DSS-3) (Silicibacter pomeroyi) protein is Small ribosomal subunit protein uS15.